The chain runs to 806 residues: N-terminal kinase-like protein (806 aa).

Positions 14 to 314 (FELSPEPPEG…PEDFCRHKVL (301 aa)) constitute a Protein kinase domain. 3 HEAT repeats span residues 350–388 (IIPV…VNTQ), 389–427 (IFPH…LNVE), and 507–545 (ILPV…EDPT). 2 disordered regions span residues 586-642 (RAHP…TADR) and 663-806 (DDWS…RKLD). Pro residues predominate over residues 601-611 (RPVPEGNPAPA). Ser-752 carries the phosphoserine modification. Acidic residues predominate over residues 752–762 (SWGEDNWEGLE). The stretch at 755 to 795 (EDNWEGLEAESRQVKAELARKKREERRREMEAKRAEKKTTK) forms a coiled coil. Composition is skewed to basic and acidic residues over residues 763–773 (AESRQVKAELA) and 780–793 (RRRE…EKKT). The segment at 791-806 (KKTTKGPMKLGARKLD) is interaction with COPB1.

This sequence belongs to the protein kinase superfamily. As to quaternary structure, homooligomer. Interacts with GORAB. Interacts with COPA, COPB1 and COPB2. Interacts with AP2B1. Expressed in diaphragm, quadriceps, thymus, liver, lung, spleen, kidney, heart and brain. Prominently expressed in neurons, and enriched at central nervous system synapses and neuromuscular junctions.

Its subcellular location is the cytoplasm. The protein resides in the cytoskeleton. The protein localises to the microtubule organizing center. It localises to the centrosome. It is found in the endoplasmic reticulum-Golgi intermediate compartment. Its subcellular location is the golgi apparatus. The protein resides in the cis-Golgi network. Regulates COPI-mediated retrograde protein traffic at the interface between the Golgi apparatus and the endoplasmic reticulum. Involved in the maintenance of the Golgi apparatus morphology. The sequence is that of N-terminal kinase-like protein (Scyl1) from Mus musculus (Mouse).